A 360-amino-acid chain; its full sequence is MASVNPFDLLDDDAEDPSQIVASKPLKVVAPVQTAKSGKMPTKPPPPSQAVREARNAPGGGRGAGRGGSYGRGGRGGNNRDSRNNDGPANENGYGGGYRRSEEGDGARRGGPVGGYRGDRRGSYSNGGDSGDSERPRKNYDRHSRTAYGNEDKRDGAGRANWGTTQDDITPVTEESTAVVDKNLTVEKQDGEGEATDAKNETPAEKAEEKPEDKEMTLEEYEKVLEEKKKALQATKVEERKVDTKAFEAMQQLSSKKSNNDEVFIKLGTEKDKRITEREEKTRKSLSINEFLKPADGKSYYRPRGGYQGGREGRGPREGNQRDGGRNLREGGRNQRDGGAAAQAPTPAIGDSAQFPTLGK.

Disordered stretches follow at residues 1–216 and 250–360; these read MASV…DKEM and MQQL…TLGK. The residue at position 2 (Ala-2) is an N-acetylalanine. Gly residues predominate over residues 58 to 77; the sequence is PGGGRGAGRGGSYGRGGRGG. 2 stretches are compositionally biased toward basic and acidic residues: residues 99 to 108 and 132 to 157; these read RRSEEGDGAR and DSERPRKNYDRHSRTAYGNEDKRDGA. A compositionally biased stretch (polar residues) spans 162-176; sequence WGTTQDDITPVTEES. Composition is skewed to basic and acidic residues over residues 184 to 216, 258 to 283, and 311 to 336; these read LTVEKQDGEGEATDAKNETPAEKAEEKPEDKEM, SNNDEVFIKLGTEKDKRITEREEKTR, and REGRGPREGNQRDGGRNLREGGRNQR. The 66-residue stretch at 223-288 folds into the FF domain; that stretch reads KVLEEKKKAL…EEKTRKSLSI (66 aa). Ser-258 is modified (phosphoserine).

The protein belongs to the SERBP1-HABP4 family.

The protein resides in the nucleus. It is found in the cytoplasm. Its subcellular location is the perinuclear region. Ribosome-binding protein that acts as a regulator of mRNA translation by promoting ribosome inactivation. Binds RNA. This is RGG repeats nuclear RNA binding protein B from Arabidopsis thaliana (Mouse-ear cress).